A 276-amino-acid polypeptide reads, in one-letter code: Undecaprenyl-diphosphatase (276 aa).

The next 5 helical transmembrane spans lie at 85 to 105 (MNVVIATVPAVALALLFEKTI), 108 to 128 (VLFAPVPVAVALVVGGAAILW), 187 to 207 (VATEFSFFLAIPVIFGATLYE), 217 to 237 (VDSVGLFAIGLVAAFVSAFAC), and 253 to 273 (FAWYRIAFGLFVLLVGYSGWI).

Belongs to the UppP family.

It localises to the cell inner membrane. The enzyme catalyses di-trans,octa-cis-undecaprenyl diphosphate + H2O = di-trans,octa-cis-undecaprenyl phosphate + phosphate + H(+). Its function is as follows. Catalyzes the dephosphorylation of undecaprenyl diphosphate (UPP). Confers resistance to bacitracin. This is Undecaprenyl-diphosphatase from Burkholderia mallei (strain NCTC 10247).